A 77-amino-acid polypeptide reads, in one-letter code: MATFDDVKAVVVEQLSIDADAVKMESKIIEDLGADSLDVVELIMALEEKFEIEIPDSDAEKLIKIEDVVNYIDNLKK.

A Carrier domain is found at 1 to 76 (MATFDDVKAV…DVVNYIDNLK (76 aa)). O-(pantetheine 4'-phosphoryl)serine is present on Ser36.

The protein belongs to the acyl carrier protein (ACP) family. Post-translationally, 4'-phosphopantetheine is transferred from CoA to a specific serine of apo-ACP by AcpS. This modification is essential for activity because fatty acids are bound in thioester linkage to the sulfhydryl of the prosthetic group.

It localises to the cytoplasm. It functions in the pathway lipid metabolism; fatty acid biosynthesis. In terms of biological role, carrier of the growing fatty acid chain in fatty acid biosynthesis. The polypeptide is Acyl carrier protein (Campylobacter jejuni (strain RM1221)).